The sequence spans 322 residues: Ferrochelatase (322 aa).

Residues His-194 and Glu-275 each coordinate Fe cation.

This sequence belongs to the ferrochelatase family.

It is found in the cytoplasm. It catalyses the reaction heme b + 2 H(+) = protoporphyrin IX + Fe(2+). It functions in the pathway porphyrin-containing compound metabolism; protoheme biosynthesis; protoheme from protoporphyrin-IX: step 1/1. Functionally, catalyzes the ferrous insertion into protoporphyrin IX. The polypeptide is Ferrochelatase (Yersinia enterocolitica).